The chain runs to 105 residues: Large ribosomal subunit protein uL24 (105 aa).

It belongs to the universal ribosomal protein uL24 family. As to quaternary structure, part of the 50S ribosomal subunit.

One of two assembly initiator proteins, it binds directly to the 5'-end of the 23S rRNA, where it nucleates assembly of the 50S subunit. Functionally, one of the proteins that surrounds the polypeptide exit tunnel on the outside of the subunit. This chain is Large ribosomal subunit protein uL24, found in Staphylococcus epidermidis (strain ATCC 35984 / DSM 28319 / BCRC 17069 / CCUG 31568 / BM 3577 / RP62A).